Here is a 491-residue protein sequence, read N- to C-terminus: Adenylosuccinate synthetase, chloroplastic (491 aa).

Residues 78–84 (GDEGKGK) and 106–108 (GHT) each bind GTP. The active-site Proton acceptor is Asp79. Mg(2+)-binding residues include Asp79 and Gly106. IMP contacts are provided by residues 79 to 82 (DEGK), 104 to 107 (NAGH), Thr196, Arg210, Gln290, Thr305, and Arg369. His107 serves as the catalytic Proton donor. A substrate-binding site is contributed by 365–371 (TTTGRPR). GTP contacts are provided by residues Arg371, 397 to 399 (KLD), and 480 to 482 (GIG).

The protein belongs to the adenylosuccinate synthetase family. Homodimer. Mg(2+) serves as cofactor.

Its subcellular location is the plastid. It localises to the chloroplast. It carries out the reaction IMP + L-aspartate + GTP = N(6)-(1,2-dicarboxyethyl)-AMP + GDP + phosphate + 2 H(+). The protein operates within purine metabolism; AMP biosynthesis via de novo pathway; AMP from IMP: step 1/2. In terms of biological role, plays an important role in the de novo pathway and in the salvage pathway of purine nucleotide biosynthesis. Catalyzes the first committed step in the biosynthesis of AMP from IMP. This chain is Adenylosuccinate synthetase, chloroplastic, found in Populus trichocarpa (Western balsam poplar).